The following is a 284-amino-acid chain: Pseudouridine-5'-phosphate glycosidase (284 aa).

Catalysis depends on Glu-8, which acts as the Proton donor. Substrate contacts are provided by Lys-69 and Val-89. Asp-119 lines the Mn(2+) pocket. A substrate-binding site is contributed by 121 to 123; sequence SQD. The active-site Nucleophile is the Lys-140.

The protein belongs to the pseudouridine-5'-phosphate glycosidase family. In terms of assembly, homotrimer. Requires Mn(2+) as cofactor.

It catalyses the reaction D-ribose 5-phosphate + uracil = psi-UMP + H2O. Catalyzes the reversible cleavage of pseudouridine 5'-phosphate (PsiMP) to ribose 5-phosphate and uracil. Functions biologically in the cleavage direction, as part of a pseudouridine degradation pathway. In Pseudothermotoga lettingae (strain ATCC BAA-301 / DSM 14385 / NBRC 107922 / TMO) (Thermotoga lettingae), this protein is Pseudouridine-5'-phosphate glycosidase.